Consider the following 1405-residue polypeptide: Protein crumbs homolog 1 (1405 aa).

A signal peptide spans 1–27; that stretch reads MKLKRTAYLLFLYLSSSLLICIKNSFC. Residues 28–1339 lie on the Extracellular side of the membrane; that stretch reads NKNNTRCLSG…RCELDLADDR (1312 aa). Residues 30–67 enclose the EGF-like 1; atypical domain; that stretch reads NNTRCLSGPCQNNSTCKHFPQDNNCCLDTANNLDKDCE. Disulfide bonds link Cys34-Cys45, Cys39-Cys54, Cys55-Cys66, Cys73-Cys84, Cys78-Cys95, Cys97-Cys106, Cys113-Cys124, Cys118-Cys133, Cys135-Cys144, Cys151-Cys162, Cys156-Cys171, Cys173-Cys182, Cys189-Cys200, Cys194-Cys209, Cys211-Cys220, Cys227-Cys238, Cys232-Cys247, Cys249-Cys258, Cys265-Cys276, Cys270-Cys285, Cys287-Cys297, Cys304-Cys315, Cys309-Cys324, Cys326-Cys335, Cys342-Cys353, Cys347-Cys382, Cys384-Cys393, Cys400-Cys411, Cys405-Cys420, Cys422-Cys437, Cys444-Cys455, Cys449-Cys468, and Cys470-Cys479. A glycan (N-linked (GlcNAc...) asparagine) is linked at Asn41. 2 EGF-like domains span residues 69 to 107 and 109 to 145; these read LKDP…LNCE and ATNS…RFCE. The 37-residue stretch at 147–183 folds into the EGF-like 4; calcium-binding domain; the sequence is DHNECASSPCHNGAMCQDGINGYSCFCVPGYQGRHCD. In terms of domain architecture, EGF-like 5; calcium-binding spans 185 to 221; it reads EVDECVSDPCKNEAVCLNEIGRYTCVCPQEFSGVNCE. An EGF-like 6; calcium-binding domain is found at 223 to 259; sequence EIDECRSQPCLHGATCQDAPGGYSCDCAPGFLGEHCE. EGF-like domains follow at residues 261-298, 300-336, 338-394, 396-438, and 440-480; these read SVNE…MHCE, LIPL…ALCE, DINE…IHCE, DVDE…ENCS, and ILLG…PLCE. The Laminin G-like 1 domain occupies 482 to 669; that stretch reads VTTLSFGSNG…GLSSNVKAGC (188 aa). N-linked (GlcNAc...) asparagine glycans are attached at residues Asn560 and Asn656. Cystine bridges form between Cys641/Cys669, Cys675/Cys686, Cys680/Cys695, and Cys697/Cys706. The EGF-like 12 domain occupies 671-707; that stretch reads GKDWCESQPCQNRGRCINLWQGYQCECDRPYTGSNCL. In terms of domain architecture, Laminin G-like 2 spans 713 to 884; that stretch reads GRFGQDDSTG…PILVNVTQGC (172 aa). N-linked (GlcNAc...) asparagine glycosylation is found at Asn756 and Asn879. 6 cysteine pairs are disulfide-bonded: Cys850–Cys884, Cys890–Cys901, Cys895–Cys910, Cys912–Cys921, Cys927–Cys938, and Cys932–Cys947. EGF-like domains are found at residues 886–922 and 923–959; these read GDNT…RACE and QVQW…LSRE. In terms of domain architecture, Laminin G-like 3 spans 950 to 1136; sequence NAVFSGLSRE…VSTNMVLTGC (187 aa). Residues Asn967, Asn974, and Asn999 are each glycosylated (N-linked (GlcNAc...) asparagine). 16 disulfide bridges follow: Cys1095–Cys1136, Cys1142–Cys1153, Cys1147–Cys1162, Cys1164–Cys1173, Cys1180–Cys1190, Cys1185–Cys1199, Cys1201–Cys1210, Cys1217–Cys1228, Cys1222–Cys1237, Cys1239–Cys1248, Cys1258–Cys1273, Cys1267–Cys1282, Cys1284–Cys1293, Cys1300–Cys1311, Cys1305–Cys1320, and Cys1322–Cys1331. Residues 1138 to 1174 enclose the EGF-like 15 domain; it reads PSNACHSSPCLHGGNCEDSYSSYRCACLSGWSGTHCE. Residues 1176-1211 form the EGF-like 16; calcium-binding domain; the sequence is NIDECFSSPCIHGNCSDGVAAYHCRCEPGYTGVNCE. Asn1189 carries N-linked (GlcNAc...) asparagine glycosylation. 2 EGF-like domains span residues 1213–1249 and 1254–1294; these read DVDN…RFCR and PSTV…EWCE. N-linked (GlcNAc...) asparagine glycans are attached at residues Asn1242 and Asn1264. The EGF-like 19; calcium-binding domain occupies 1296 to 1332; that stretch reads DINECASDPCINGGLCRDLVNRFLCICDVAFAGERCE. The helical transmembrane segment at 1340–1360 threads the bilayer; it reads LLGIFTAVGSGTLALFFILLL. Topologically, residues 1361–1405 are cytoplasmic; that stretch reads AGVASLIASNKRATQGTYSPSGQEKAGPRVEMWIRMPPPALERLI.

The protein belongs to the Crumbs protein family. Component of a complex composed of PALS1, CRB1 and EPB41L5. Within the complex, interacts (via intracellular domain) with PALS1 and EPB41L5 (via FERM domain). Forms a complex with MPP4 and PALS1. Interacts with MPDZ/MUPP1 and MPP4. Post-translationally, glycosylated. As to expression, expressed in the kidney, lung, stomach and testis. Expressed in the brain. Expressed in the retina of the eye. Expressed in the outer nuclear layer, photoreceptor layer and inner nuclear layer of the retina. Expressed in Mueller cell radial processes in the inner nuclear layer, in apical processes sclerad to the external limiting membrane, and in the subapical region, adjacent to the adherens junction of retinal photoreceptors. In the brain, expressed in the granular layer of the cerebellum, the hippocampal dentate gyrus, the olfactory bulbs, the subventricular region lining the telencephalic ventricles and the rostral migratory stream. In terms of tissue distribution, ubiquitously expressed.

The protein resides in the apical cell membrane. It localises to the secreted. The protein localises to the cell projection. It is found in the cilium. Its subcellular location is the photoreceptor outer segment. The protein resides in the photoreceptor inner segment. It localises to the cytoplasm. The protein localises to the cell junction. It is found in the focal adhesion. Plays a role in photoreceptor morphogenesis in the retina. May maintain cell polarization and adhesion. In terms of biological role, may play a role in epidermal tissue morphogenesis. May function in cell attachment for stratified epithelial organization. The sequence is that of Protein crumbs homolog 1 (Crb1) from Mus musculus (Mouse).